The sequence spans 304 residues: MATLREIRTRIKSVKSTQQLTKAMKMVAAAKLRRAQDRALQARPYAAKLKELLDSLSGKVDTTINPLLTPRSEVKNVLVILVTSDRGLCGAFNTNIIKMAQRLIDQDYADMSRQGRVKMICAGRRGNDFFRKRGYNVVYGYPNIFNQLDFNAAKEIVEKATELYLSGEVDKVHVIYNEFKNVVSPNLISEVFLPIAPSKKDDAGSDAARQNKLVPIVDYIYEPSPEAIINELVPKHLNTQLWRVLLESNAAEQASRMTAMDSATDNAKELLRSLSITYNRARQAAITKEILEIVGGANALEQSA.

Belongs to the ATPase gamma chain family. As to quaternary structure, F-type ATPases have 2 components, CF(1) - the catalytic core - and CF(0) - the membrane proton channel. CF(1) has five subunits: alpha(3), beta(3), gamma(1), delta(1), epsilon(1). CF(0) has three main subunits: a, b and c.

Its subcellular location is the cell membrane. Functionally, produces ATP from ADP in the presence of a proton gradient across the membrane. The gamma chain is believed to be important in regulating ATPase activity and the flow of protons through the CF(0) complex. The chain is ATP synthase gamma chain from Chloroherpeton thalassium (strain ATCC 35110 / GB-78).